A 782-amino-acid polypeptide reads, in one-letter code: Lysosome membrane protein 2-C (782 aa).

Over Met1–Gly7 the chain is Cytoplasmic. The chain crosses the membrane as a helical span at residues Leu8 to Ala28. At Leu29–Lys739 the chain is on the lumenal side. N-linked (GlcNAc...) asparagine glycosylation is found at Asn77, Asn105, Asn191, Asn219, Asn234, Asn243, Asn281, Asn368, Asn387, Asn401, Asn427, Asn432, Asn451, Asn465, Asn501, Asn536, Asn540, Asn595, Asn605, Asn613, Asn646, and Asn692. The chain crosses the membrane as a helical span at residues Ile740–Met760. At Ala761–Asn782 the chain is on the cytoplasmic side. The Tyrosine-type lysosomal sorting signal motif lies at Gly777–Ile781.

Belongs to the CD36 family. Heavily glycosylated.

It localises to the lysosome membrane. Functionally, may act as a lysosomal receptor. May be involved role in macropinocytosis and fluid phase exocytosis. The sequence is that of Lysosome membrane protein 2-C (lmpC) from Dictyostelium discoideum (Social amoeba).